The chain runs to 303 residues: Diaminopimelate epimerase (303 aa).

The substrate site is built by N15, Q47, and N67. C76 acts as the Proton donor in catalysis. Substrate-binding positions include 77–78 (GN), N163, N197, and 215–216 (ER). C224 acts as the Proton acceptor in catalysis. 225–226 (GS) is a substrate binding site. The tract at residues 278–303 (FDPATGEWSRDTQGLQGSGNADRGAA) is disordered.

This sequence belongs to the diaminopimelate epimerase family. In terms of assembly, homodimer.

The protein localises to the cytoplasm. It catalyses the reaction (2S,6S)-2,6-diaminopimelate = meso-2,6-diaminopimelate. Its pathway is amino-acid biosynthesis; L-lysine biosynthesis via DAP pathway; DL-2,6-diaminopimelate from LL-2,6-diaminopimelate: step 1/1. Catalyzes the stereoinversion of LL-2,6-diaminopimelate (L,L-DAP) to meso-diaminopimelate (meso-DAP), a precursor of L-lysine and an essential component of the bacterial peptidoglycan. The protein is Diaminopimelate epimerase of Brucella melitensis biotype 1 (strain ATCC 23456 / CCUG 17765 / NCTC 10094 / 16M).